Here is a 543-residue protein sequence, read N- to C-terminus: Coiled-coil domain-containing protein 9 (543 aa).

2 stretches are compositionally biased toward basic and acidic residues: residues 38–47 (IEEDRKKAEL) and 59–72 (RSME…EEKS). The interval 38–543 (IEEDRKKAEL…SGEAWPFANA (506 aa)) is disordered. Thr-94 is subject to Phosphothreonine. Residues Arg-106, Arg-120, Arg-126, and Arg-128 each carry the omega-N-methylarginine modification. Asymmetric dimethylarginine occurs at positions 129, 131, and 133. The residue at position 135 (Ser-135) is a Phosphoserine. Composition is skewed to basic and acidic residues over residues 146 to 183 (TSDR…REGV), 192 to 212 (FLDD…DRRE), and 225 to 239 (DFER…ERQG). Residues 147 to 183 (SDRKSKEWEERRRQNIEKMNEEMEKIAEYERNQREGV) adopt a coiled-coil conformation. Residues Ser-246 and Ser-253 each carry the phosphoserine modification. Composition is skewed to basic and acidic residues over residues 256 to 277 (GRER…QERL), 287 to 300 (WRRE…DGMF), 309 to 318 (ELSHRYDDQA), and 359 to 372 (YSDH…REEA). Residues Ser-374 and Ser-384 each carry the phosphoserine modification. Polar residues predominate over residues 376-394 (APESSQSISLEETPTQASE). The segment covering 405-453 (EDGEEDVGEEEEGEEEGEDEEDEEWEDVSEDVTEEEEEEEEEFEEDEEG) has biased composition (acidic residues). A coiled-coil region spans residues 422–452 (EDEEDEEWEDVSEDVTEEEEEEEEEFEEDEE). Ser-533 carries the phosphoserine modification.

In terms of assembly, probable component of the exon junction complex (EJC); the association is RNA-dependent.

Probable component of the exon junction complex (EJC), a multiprotein complex that associates immediately upstream of the exon-exon junction on mRNAs and serves as a positional landmark for the intron exon structure of genes and directs post-transcriptional processes in the cytoplasm such as mRNA export, nonsense-mediated mRNA decay (NMD) or translation. This is Coiled-coil domain-containing protein 9 (Ccdc9) from Mus musculus (Mouse).